Consider the following 199-residue polypeptide: Holliday junction branch migration complex subunit RuvA (199 aa).

A domain I region spans residues 1–65 (MIGWLHGQII…EDALLLYGFL (65 aa)). The tract at residues 66 to 144 (DKEERSLFRS…QFDGSVSDTF (79 aa)) is domain II. The segment at 144–148 (FQKQA) is flexible linker. The segment at 149–199 (GSTHSQQEAISALEALGYKPQEAWKVMNKIDNGNKSCEQLIREALQILSSR) is domain III.

Belongs to the RuvA family. In terms of assembly, homotetramer. Forms an RuvA(8)-RuvB(12)-Holliday junction (HJ) complex. HJ DNA is sandwiched between 2 RuvA tetramers; dsDNA enters through RuvA and exits via RuvB. An RuvB hexamer assembles on each DNA strand where it exits the tetramer. Each RuvB hexamer is contacted by two RuvA subunits (via domain III) on 2 adjacent RuvB subunits; this complex drives branch migration. In the full resolvosome a probable DNA-RuvA(4)-RuvB(12)-RuvC(2) complex forms which resolves the HJ.

The protein localises to the cytoplasm. In terms of biological role, the RuvA-RuvB-RuvC complex processes Holliday junction (HJ) DNA during genetic recombination and DNA repair, while the RuvA-RuvB complex plays an important role in the rescue of blocked DNA replication forks via replication fork reversal (RFR). RuvA specifically binds to HJ cruciform DNA, conferring on it an open structure. The RuvB hexamer acts as an ATP-dependent pump, pulling dsDNA into and through the RuvAB complex. HJ branch migration allows RuvC to scan DNA until it finds its consensus sequence, where it cleaves and resolves the cruciform DNA. This Legionella pneumophila subsp. pneumophila (strain Philadelphia 1 / ATCC 33152 / DSM 7513) protein is Holliday junction branch migration complex subunit RuvA.